A 222-amino-acid polypeptide reads, in one-letter code: Hexitol phosphatase B (222 aa).

Asp13 (nucleophile) is an active-site residue. A divalent metal cation contacts are provided by Asp13 and Asp15. Substrate contacts are provided by residues 13–15 (DMD), 115–116 (SA), and Lys148. Asp15 serves as the catalytic Proton donor. Asp173 is an a divalent metal cation binding site.

The protein belongs to the HAD-like hydrolase superfamily. CbbY/CbbZ/Gph/YieH family. It depends on Mg(2+) as a cofactor. Requires Mn(2+) as cofactor. The cofactor is Co(2+). Zn(2+) is required as a cofactor.

It carries out the reaction sugar phosphate + H2O = sugar + phosphate.. The catalysed reaction is 2-deoxy-D-glucose 6-phosphate + H2O = 2-deoxy-D-glucose + phosphate. It catalyses the reaction D-mannitol 1-phosphate + H2O = D-mannitol + phosphate. The enzyme catalyses D-sorbitol 6-phosphate + H2O = D-sorbitol + phosphate. Sugar-phosphate phosphohydrolase that catalyzes the dephosphorylation of D-mannitol 1-phosphate and D-sorbitol 6-phosphate. Also catalyzes the dephosphorylation of 2-deoxyglucose 6-phosphate (2dGlu6P); this is a biologically important activity in vivo since it contributes to the elimination of this toxic compound and plays an important role in the resistance of E.coli to 2-deoxyglucose. This Escherichia coli O157:H7 protein is Hexitol phosphatase B.